Reading from the N-terminus, the 185-residue chain is Neuronal vesicle trafficking-associated protein 1 (185 aa).

The Cytoplasmic portion of the chain corresponds to 1–82; the sequence is MVKLGNNFAE…ITEGVTERFK (82 aa). Residues 83 to 103 traverse the membrane as a helical; Signal-anchor for type II membrane protein segment; that stretch reads VSVLVLFALAFLTCVVFLVVY. The Lumenal segment spans residues 104 to 185; that stretch reads KVYKYDRACP…QETEAAEKSA (82 aa). The tract at residues 129-164 is required for GRIP1 interaction; the sequence is ESYYTEQDSSAREKFYTVINHYNVAKQSITRSVSPW.

This sequence belongs to the NSG family. Forms a complex with GRIP1, GRIA2 and STX12 through direct interaction with GRIP1; controls the intracellular fate of AMPAR and the endosomal sorting of the GRIA2 subunit toward recycling and membrane targeting. Interacts with STX12. Interacts with APP; could regulate APP processing. Interacts with FAM171A1. As to expression, pituitary and less in adrenal gland and testis. Expressed in the hippocampus throughout development. At P0, highly and broadly expressed throughout the cortical plate, but is down-regulated overall at P8 and P14, but remains relatively enriched in layer V. At P0 is expressed ubiquitously in the developing cerebellum namely Purkinje neurons as well as granule neurons. However, it becomes restricted to Purkinje cells by P8. This exclusive expression in Purkinje cells is maintained throughout adulthood.

Its subcellular location is the membrane. It is found in the golgi apparatus. It localises to the trans-Golgi network membrane. The protein resides in the endosome membrane. The protein localises to the cell projection. Its subcellular location is the dendrite. It is found in the early endosome membrane. It localises to the late endosome membrane. The protein resides in the lysosome lumen. The protein localises to the recycling endosome membrane. Its subcellular location is the cytoplasmic vesicle membrane. It is found in the golgi stack membrane. It localises to the endosome. The protein resides in the multivesicular body membrane. The protein localises to the endoplasmic reticulum membrane. Plays a role in the recycling mechanism in neurons of multiple receptors, including AMPAR, APP and L1CAM and acts at the level of early endosomes to promote sorting of receptors toward a recycling pathway. Regulates sorting and recycling of GRIA2 through interaction with GRIP1 and then contributes to the regulation of synaptic transmission and plasticity by affecting the recycling and targeting of AMPA receptors to the synapse. Is required for faithful sorting of L1CAM to axons by facilitating trafficking from somatodendritic early endosome or the recycling endosome. In an other hand, induces apoptosis via the activation of CASP3 in response to DNA damage. The chain is Neuronal vesicle trafficking-associated protein 1 from Mus musculus (Mouse).